The sequence spans 1028 residues: Multidrug resistance protein MdtC (1028 aa).

A run of 12 helical transmembrane segments spans residues 3-23 (FFAL…AITL), 333-353 (EVEQ…FLFL), 360-380 (LIPA…MYLC), 387-407 (LSLM…IVVL), 431-451 (VGFT…PLLL), 463-483 (FAVT…TLTP), 528-548 (LVGV…ISIP), 853-873 (VILI…LYES), 875-895 (VHPL…LLAL), 897-917 (LFNA…IGIV), 953-973 (PIMM…ISGG), and 984-1004 (ITIV…TPVV).

This sequence belongs to the resistance-nodulation-cell division (RND) (TC 2.A.6) family. MdtC subfamily. Part of a tripartite efflux system composed of MdtA, MdtB and MdtC. MdtC forms a heteromultimer with MdtB.

The protein localises to the cell inner membrane. This Citrobacter koseri (strain ATCC BAA-895 / CDC 4225-83 / SGSC4696) protein is Multidrug resistance protein MdtC.